A 355-amino-acid polypeptide reads, in one-letter code: tRNA-specific 2-thiouridylase MnmA (355 aa).

Residues 7-14 (GLSGGVDS) and L33 contribute to the ATP site. The Nucleophile role is filled by C94. A disulfide bridge links C94 with C193. Position 119 (G119) interacts with ATP. The interval 143 to 145 (KDQ) is interaction with tRNA. The active-site Cysteine persulfide intermediate is C193. The tract at residues 298–299 (RY) is interaction with tRNA.

It belongs to the MnmA/TRMU family.

The protein resides in the cytoplasm. It catalyses the reaction S-sulfanyl-L-cysteinyl-[protein] + uridine(34) in tRNA + AH2 + ATP = 2-thiouridine(34) in tRNA + L-cysteinyl-[protein] + A + AMP + diphosphate + H(+). Functionally, catalyzes the 2-thiolation of uridine at the wobble position (U34) of tRNA, leading to the formation of s(2)U34. This chain is tRNA-specific 2-thiouridylase MnmA, found in Acaryochloris marina (strain MBIC 11017).